Reading from the N-terminus, the 417-residue chain is Serine hydroxymethyltransferase (417 aa).

(6S)-5,6,7,8-tetrahydrofolate-binding positions include leucine 121 and 125–127 (GHL). Residue lysine 229 is modified to N6-(pyridoxal phosphate)lysine. 355 to 357 (SPF) serves as a coordination point for (6S)-5,6,7,8-tetrahydrofolate.

This sequence belongs to the SHMT family. Homodimer. Pyridoxal 5'-phosphate serves as cofactor.

Its subcellular location is the cytoplasm. It carries out the reaction (6R)-5,10-methylene-5,6,7,8-tetrahydrofolate + glycine + H2O = (6S)-5,6,7,8-tetrahydrofolate + L-serine. It functions in the pathway one-carbon metabolism; tetrahydrofolate interconversion. Its pathway is amino-acid biosynthesis; glycine biosynthesis; glycine from L-serine: step 1/1. Catalyzes the reversible interconversion of serine and glycine with tetrahydrofolate (THF) serving as the one-carbon carrier. This reaction serves as the major source of one-carbon groups required for the biosynthesis of purines, thymidylate, methionine, and other important biomolecules. Also exhibits THF-independent aldolase activity toward beta-hydroxyamino acids, producing glycine and aldehydes, via a retro-aldol mechanism. The polypeptide is Serine hydroxymethyltransferase (Stenotrophomonas maltophilia (strain K279a)).